Reading from the N-terminus, the 345-residue chain is MAESYKNAGVDIHAGYEAVERMKSHVQRTMRKEVLGGLGGFGAAFDLSQLNMQKPVLVSGTDGVGTKLKLAIDHDKHDTIGIDAVAMCVNDILTTGAEPLYFLDYIATNKVVPEVIEQIVKGVSDGCEETNTALIGGETAEMGEMYHEGEYDLAGFAVGAVEKDDYIDGSTVKPGQVIIGLASSGIHSNGYSLVRHLIKASEVDLNAEFENGKSYLDTFLEPTRLYVKPVLAVKEQVKLYAMTHITGGGFYENIPRALPEGVTAEIDVQSFPTPAVFDWLQKEGNIETEEMYNIFNMGIGFTLVVDEAEAEKTLSILKEQNVDAYQIGKITEASDEPIVLTGVKA.

It belongs to the AIR synthase family.

It is found in the cytoplasm. It catalyses the reaction 2-formamido-N(1)-(5-O-phospho-beta-D-ribosyl)acetamidine + ATP = 5-amino-1-(5-phospho-beta-D-ribosyl)imidazole + ADP + phosphate + H(+). It functions in the pathway purine metabolism; IMP biosynthesis via de novo pathway; 5-amino-1-(5-phospho-D-ribosyl)imidazole from N(2)-formyl-N(1)-(5-phospho-D-ribosyl)glycinamide: step 2/2. The protein is Phosphoribosylformylglycinamidine cyclo-ligase of Staphylococcus carnosus (strain TM300).